The primary structure comprises 162 residues: Interleukin-15 (162 aa).

The signal sequence occupies residues 1 to 29 (MKILKPYMRNTSISCYLCFLLNSHFLTEA). The propeptide occupies 30–48 (GIHVFILGCVSVGLPKTEA). 2 disulfides stabilise this stretch: Cys-83/Cys-133 and Cys-90/Cys-136. Asn-104, Asn-108, and Asn-119 each carry an N-linked (GlcNAc...) asparagine glycan.

Belongs to the IL-15/IL-21 family.

It localises to the secreted. In terms of biological role, cytokine that plays a major role in the development of inflammatory and protective immune responses to microbial invaders and parasites by modulating immune cells of both the innate and adaptive immune systems. Stimulates the proliferation and activation of natural killer cells, T-cells and B-cells and promotes the secretion of several cytokines. In monocytes, induces the production of IL8 and monocyte chemotactic protein 1/CCL2, two chemokines that attract neutrophils and monocytes respectively to sites of infection. Unlike most cytokines, which are secreted in soluble form, IL15 is expressed in association with its high affinity IL15RA on the surface of IL15-producing cells and delivers signals to target cells that express IL2RB and IL2RG receptor subunits. Binding to its receptor triggers the phosphorylation of JAK1 and JAK3 and the recruitment and subsequent phosphorylation of signal transducer and activator of transcription-3/STAT3 and STAT5. In mast cells, induces the rapid tyrosine phosphorylation of STAT6 and thereby controls mast cell survival and release of cytokines such as IL4. In Mus musculus (Mouse), this protein is Interleukin-15 (Il15).